We begin with the raw amino-acid sequence, 139 residues long: Large ribosomal subunit protein uL16 (139 aa).

It belongs to the universal ribosomal protein uL16 family. Part of the 50S ribosomal subunit.

In terms of biological role, binds 23S rRNA and is also seen to make contacts with the A and possibly P site tRNAs. The chain is Large ribosomal subunit protein uL16 from Treponema denticola (strain ATCC 35405 / DSM 14222 / CIP 103919 / JCM 8153 / KCTC 15104).